The sequence spans 591 residues: L-fucose isomerase (591 aa).

Catalysis depends on proton acceptor residues Glu-337 and Asp-361. Mn(2+)-binding residues include Glu-337, Asp-361, and His-528.

Belongs to the L-fucose isomerase family. In terms of assembly, homohexamer. Mn(2+) is required as a cofactor.

Its subcellular location is the cytoplasm. It catalyses the reaction L-fucose = L-fuculose. The protein operates within carbohydrate degradation; L-fucose degradation; L-lactaldehyde and glycerone phosphate from L-fucose: step 1/3. Converts the aldose L-fucose into the corresponding ketose L-fuculose. The sequence is that of L-fucose isomerase from Escherichia coli O6:H1 (strain CFT073 / ATCC 700928 / UPEC).